Here is a 177-residue protein sequence, read N- to C-terminus: Bifunctional protein PyrR (177 aa).

Residues 97-109 carry the PRPP-binding motif; sequence IILVDDVLYTGRT.

This sequence belongs to the purine/pyrimidine phosphoribosyltransferase family. PyrR subfamily.

The catalysed reaction is UMP + diphosphate = 5-phospho-alpha-D-ribose 1-diphosphate + uracil. Regulates the transcription of the pyrimidine nucleotide (pyr) operon in response to exogenous pyrimidines. Functionally, also displays a weak uracil phosphoribosyltransferase activity which is not physiologically significant. The sequence is that of Bifunctional protein PyrR from Nitrosococcus oceani (strain ATCC 19707 / BCRC 17464 / JCM 30415 / NCIMB 11848 / C-107).